The primary structure comprises 132 residues: UPF0292 protein PH1700 (132 aa).

A Toprim domain is found at Glu-20–Leu-100. Mg(2+)-binding residues include Glu-26, Asp-69, and Asp-71.

The protein belongs to the UPF0292 family. It depends on Mg(2+) as a cofactor.

The chain is UPF0292 protein PH1700 from Pyrococcus horikoshii (strain ATCC 700860 / DSM 12428 / JCM 9974 / NBRC 100139 / OT-3).